The primary structure comprises 120 residues: NAD(P)H-quinone oxidoreductase subunit 3, chloroplastic (120 aa).

3 helical membrane-spanning segments follow: residues 7–27 (YDYFFVFLLIISFFSILIFSL), 64–84 (MFALVFVIFDVETVFLYPWAM), and 89–109 (FGISSFIEALIFILILIIGLV).

The protein belongs to the complex I subunit 3 family. NDH is composed of at least 16 different subunits, 5 of which are encoded in the nucleus.

It is found in the plastid. The protein localises to the chloroplast thylakoid membrane. It carries out the reaction a plastoquinone + NADH + (n+1) H(+)(in) = a plastoquinol + NAD(+) + n H(+)(out). The enzyme catalyses a plastoquinone + NADPH + (n+1) H(+)(in) = a plastoquinol + NADP(+) + n H(+)(out). In terms of biological role, NDH shuttles electrons from NAD(P)H:plastoquinone, via FMN and iron-sulfur (Fe-S) centers, to quinones in the photosynthetic chain and possibly in a chloroplast respiratory chain. The immediate electron acceptor for the enzyme in this species is believed to be plastoquinone. Couples the redox reaction to proton translocation, and thus conserves the redox energy in a proton gradient. This Marchantia polymorpha (Common liverwort) protein is NAD(P)H-quinone oxidoreductase subunit 3, chloroplastic.